The sequence spans 152 residues: Protein X (152 aa).

Residues 68 to 115 are mitochondrial targeting sequence; that stretch reads PCALRFTSATWRCMETPMNSVTCLRKRTLGLRTAPPTVMEQYIKDCLF.

This sequence belongs to the orthohepadnavirus protein X family. In terms of assembly, may form homodimer. May interact with host CEBPA, CFLAR, CREB1, DDB1, E4F1, HBXIP, HSPD1/HSP60, NFKBIA, POLR2E and SMAD4. Interacts with host SMC5-SMC6 complex and induces its degradation. Interacts with host TRPC4AP; leading to prevent ubiquitination of TRPC4AP. Interacts with host PLSCR1; this interaction promotes ubiquitination and degradation of HBx and impairs HBx-mediated cell proliferation. A fraction may be phosphorylated in insect cells and HepG2 cells, a human hepatoblastoma cell line. Phosphorylated in vitro by host protein kinase C or mitogen-activated protein kinase. N-acetylated in insect cells.

Its subcellular location is the host cytoplasm. The protein resides in the host nucleus. The protein localises to the host mitochondrion. In terms of biological role, multifunctional protein that plays a role in silencing host antiviral defenses and promoting viral transcription. Does not seem to be essential for HBV infection. May be directly involved in development of cirrhosis and liver cancer (hepatocellular carcinoma). Most of cytosolic activities involve modulation of cytosolic calcium. The effect on apoptosis is controversial depending on the cell types in which the studies have been conducted. May induce apoptosis by localizing in mitochondria and causing loss of mitochondrial membrane potential. May also modulate apoptosis by binding host CFLAR, a key regulator of the death-inducing signaling complex (DISC). Promotes viral transcription by using the host E3 ubiquitin ligase DDB1 to target the SMC5-SMC6 complex to proteasomal degradation. This host complex would otherwise bind to viral episomal DNA, and prevents its transcription. Moderately stimulates transcription of many different viral and cellular transcription elements. Promoters and enhancers stimulated by HBx contain DNA binding sites for NF-kappa-B, AP-1, AP-2, c-EBP, ATF/CREB, or the calcium-activated factor NF-AT. The chain is Protein X from Lagothrix lagotricha (Brown woolly monkey).